We begin with the raw amino-acid sequence, 433 residues long: Legumain (433 aa).

The N-terminal stretch at 1–17 (MIWEFTVLLSLVLGTGA) is a signal peptide. A propeptide spanning residues 18–25 (VPLEDPED) is cleaved from the precursor. N-linked (GlcNAc...) asparagine glycosylation is present at Asn91. The active site involves His148. Asn167 is a glycosylation site (N-linked (GlcNAc...) asparagine). Residue Cys189 is the Nucleophile of the active site. Asn263 and Asn272 each carry an N-linked (GlcNAc...) asparagine glycan. The propeptide occupies 324 to 433 (DLQESRRLVQ…SMNKVCHGYY (110 aa)). Cystine bridges form between Cys378–Cys412 and Cys390–Cys429.

This sequence belongs to the peptidase C13 family. In terms of assembly, homodimer before autocatalytic removal of the propeptide. Monomer after autocatalytic processing. May interact with integrins. In terms of processing, activated by autocatalytic processing at pH 4. As to expression, detected in kidney (at protein level).

It is found in the lysosome. It catalyses the reaction Hydrolysis of proteins and small molecule substrates at -Asn-|-Xaa- bonds.. Has a strict specificity for hydrolysis of asparaginyl bonds. Can also cleave aspartyl bonds slowly, especially under acidic conditions. Involved in the processing of proteins for MHC class II antigen presentation in the lysosomal/endosomal system. Also involved in MHC class I antigen presentation in cross-presenting dendritic cells by mediating cleavage and maturation of Perforin-2 (MPEG1), thereby promoting antigen translocation in the cytosol. Required for normal lysosomal protein degradation in renal proximal tubules. Required for normal degradation of internalized EGFR. Plays a role in the regulation of cell proliferation via its role in EGFR degradation. The chain is Legumain (LGMN) from Bos taurus (Bovine).